The chain runs to 122 residues: Photosystem II extrinsic protein U (122 aa).

The N-terminal stretch at 1-26 (MKTIVRLFAILMVLISSVGFVGSAVA) is a signal peptide.

The protein belongs to the PsbU family. PSII is composed of 1 copy each of membrane proteins PsbA, PsbB, PsbC, PsbD, PsbE, PsbF, PsbH, PsbI, PsbJ, PsbK, PsbL, PsbM, PsbT, PsbX, PsbY, PsbZ, Psb30/Ycf12, peripheral proteins PsbO, CyanoQ (PsbQ), PsbU, PsbV and a large number of cofactors. It forms dimeric complexes.

The protein localises to the cellular thylakoid membrane. Its function is as follows. One of the extrinsic, lumenal subunits of photosystem II (PSII). PSII is a light-driven water plastoquinone oxidoreductase, using light energy to abstract electrons from H(2)O, generating a proton gradient subsequently used for ATP formation. The extrinsic proteins stabilize the structure of photosystem II oxygen-evolving complex (OEC), the ion environment of oxygen evolution and protect the OEC against heat-induced inactivation. This is Photosystem II extrinsic protein U from Crocosphaera subtropica (strain ATCC 51142 / BH68) (Cyanothece sp. (strain ATCC 51142)).